Here is a 213-residue protein sequence, read N- to C-terminus: StAR-related lipid transfer protein 5 (213 aa).

The region spanning 1 to 213 (MDPALAAQMS…LQKAVKQFHE (213 aa)) is the START domain.

Its function is as follows. May be involved in the intracellular transport of sterols or other lipids. May bind cholesterol or other sterols. The polypeptide is StAR-related lipid transfer protein 5 (STARD5) (Pongo abelii (Sumatran orangutan)).